The primary structure comprises 507 residues: Histidine--tRNA ligase (507 aa).

This sequence belongs to the class-II aminoacyl-tRNA synthetase family. As to quaternary structure, homodimer.

Its subcellular location is the cytoplasm. The enzyme catalyses tRNA(His) + L-histidine + ATP = L-histidyl-tRNA(His) + AMP + diphosphate + H(+). The protein is Histidine--tRNA ligase of Rhizobium leguminosarum bv. trifolii (strain WSM2304).